A 65-amino-acid chain; its full sequence is Small ribosomal subunit protein eS17 (65 aa).

It belongs to the eukaryotic ribosomal protein eS17 family.

The chain is Small ribosomal subunit protein eS17 from Methanobrevibacter smithii (strain ATCC 35061 / DSM 861 / OCM 144 / PS).